Reading from the N-terminus, the 484-residue chain is Aspartyl/glutamyl-tRNA(Asn/Gln) amidotransferase subunit B (484 aa).

It belongs to the GatB/GatE family. GatB subfamily. In terms of assembly, heterotrimer of A, B and C subunits.

It carries out the reaction L-glutamyl-tRNA(Gln) + L-glutamine + ATP + H2O = L-glutaminyl-tRNA(Gln) + L-glutamate + ADP + phosphate + H(+). The catalysed reaction is L-aspartyl-tRNA(Asn) + L-glutamine + ATP + H2O = L-asparaginyl-tRNA(Asn) + L-glutamate + ADP + phosphate + 2 H(+). Allows the formation of correctly charged Asn-tRNA(Asn) or Gln-tRNA(Gln) through the transamidation of misacylated Asp-tRNA(Asn) or Glu-tRNA(Gln) in organisms which lack either or both of asparaginyl-tRNA or glutaminyl-tRNA synthetases. The reaction takes place in the presence of glutamine and ATP through an activated phospho-Asp-tRNA(Asn) or phospho-Glu-tRNA(Gln). The protein is Aspartyl/glutamyl-tRNA(Asn/Gln) amidotransferase subunit B of Anaeromyxobacter sp. (strain K).